The primary structure comprises 101 residues: ATP-dependent Clp protease adapter protein ClpS (101 aa).

Belongs to the ClpS family. In terms of assembly, binds to the N-terminal domain of the chaperone ClpA.

Involved in the modulation of the specificity of the ClpAP-mediated ATP-dependent protein degradation. This Treponema denticola (strain ATCC 35405 / DSM 14222 / CIP 103919 / JCM 8153 / KCTC 15104) protein is ATP-dependent Clp protease adapter protein ClpS.